Reading from the N-terminus, the 1462-residue chain is Gag-Pro-Pol polyprotein (1462 aa).

Glycine 2 is lipidated: N-myristoyl glycine; by host. The interval 93–142 is disordered; that stretch reads QIPSRPAPPPPSSSTHDPPDSDPQIPPPYVEPTAPQVLPVMHPHGAPPNH. Serine 105 is modified (phosphoserine; by host MAPK1). Residues 118–121 carry the PPXY motif motif; that stretch reads PPPY. The PTAP/PSAP motif motif lies at 124–127; the sequence is PTAP. CCHC-type zinc fingers lie at residues 355-372 and 378-395; these read QPCF…DCTQ and GPCP…DCPR. A Peptidase A2 domain is found at 476 to 554; that stretch reads IEALLDTGAD…NNWAIIGRDA (79 aa). Aspartate 481 (protease; shared with dimeric partner) is an active-site residue. A Reverse transcriptase domain is found at 614–804; it reads LEAGHIEPYT…GTIKFLGQII (191 aa). Mg(2+)-binding residues include aspartate 680, aspartate 755, aspartate 756, aspartate 1040, glutamate 1074, aspartate 1096, aspartate 1157, aspartate 1230, and aspartate 1287. The RNase H type-1 domain maps to 1031–1165; that stretch reads INTAPCLFSD…TDALLITPVL (135 aa). The Integrase catalytic domain maps to 1219-1388; the sequence is RGLLPNHIWQ…QPIPETHSLS (170 aa). Residues 1393 to 1443 constitute a DNA-binding region (integrase-type); sequence HWYYFKLPGLNSRQWKGPQEALQEAAGAALIPVSASSAQWIPWRLLKRAAC.

In terms of assembly, homodimer; the homodimers are part of the immature particles. Interacts with human TSG101 and NEDD4; these interactions are essential for budding and release of viral particles. As to quaternary structure, homodimer; further assembles as homohexamers. The cofactor is Mg(2+). Post-translationally, phosphorylation of the matrix protein p19 by MAPK1 seems to play a role in budding. Myristoylated. Myristoylation of the matrix (MA) domain mediates the transport and binding of Gag polyproteins to the host plasma membrane and is required for the assembly of viral particles. In terms of processing, specific enzymatic cleavages by the viral protease yield mature proteins. The polyprotein is cleaved during and after budding, this process is termed maturation. The protease is autoproteolytically processed at its N- and C-termini.

It localises to the virion. It catalyses the reaction Endonucleolytic cleavage to 5'-phosphomonoester.. The catalysed reaction is DNA(n) + a 2'-deoxyribonucleoside 5'-triphosphate = DNA(n+1) + diphosphate. The matrix domain targets Gag, Gag-Pro and Gag-Pro-Pol polyproteins to the plasma membrane via a multipartite membrane binding signal, that includes its myristoylated N-terminus. Its function is as follows. Matrix protein. In terms of biological role, forms the spherical core of the virus that encapsulates the genomic RNA-nucleocapsid complex. Functionally, binds strongly to viral nucleic acids and promote their aggregation. Also destabilizes the nucleic acids duplexes via highly structured zinc-binding motifs. The aspartyl protease mediates proteolytic cleavages of Gag and Gag-Pol polyproteins during or shortly after the release of the virion from the plasma membrane. Cleavages take place as an ordered, step-wise cascade to yield mature proteins. This process is called maturation. Displays maximal activity during the budding process just prior to particle release from the cell (Potential). Cleaves the translation initiation factor eIF4G leading to the inhibition of host cap-dependent translation. Its function is as follows. RT is a multifunctional enzyme that converts the viral RNA genome into dsDNA in the cytoplasm, shortly after virus entry into the cell. This enzyme displays a DNA polymerase activity that can copy either DNA or RNA templates, and a ribonuclease H (RNase H) activity that cleaves the RNA strand of RNA-DNA heteroduplexes in a partially processive 3' to 5'-endonucleasic mode. Conversion of viral genomic RNA into dsDNA requires many steps. A tRNA-Pro binds to the primer-binding site (PBS) situated at the 5'-end of the viral RNA. RT uses the 3' end of the tRNA primer to perform a short round of RNA-dependent minus-strand DNA synthesis. The reading proceeds through the U5 region and ends after the repeated (R) region which is present at both ends of viral RNA. The portion of the RNA-DNA heteroduplex is digested by the RNase H, resulting in a ssDNA product attached to the tRNA primer. This ssDNA/tRNA hybridizes with the identical R region situated at the 3' end of viral RNA. This template exchange, known as minus-strand DNA strong stop transfer, can be either intra- or intermolecular. RT uses the 3' end of this newly synthesized short ssDNA to perform the RNA-dependent minus-strand DNA synthesis of the whole template. RNase H digests the RNA template except for a polypurine tract (PPT) situated at the 5' end of the genome. It is not clear if both polymerase and RNase H activities are simultaneous. RNase H probably can proceed both in a polymerase-dependent (RNA cut into small fragments by the same RT performing DNA synthesis) and a polymerase-independent mode (cleavage of remaining RNA fragments by free RTs). Secondly, RT performs DNA-directed plus-strand DNA synthesis using the PPT that has not been removed by RNase H as primer. PPT and tRNA primers are then removed by RNase H. The 3' and 5' ssDNA PBS regions hybridize to form a circular dsDNA intermediate. Strand displacement synthesis by RT to the PBS and PPT ends produces a blunt ended, linear dsDNA copy of the viral genome that includes long terminal repeats (LTRs) at both ends. In terms of biological role, catalyzes viral DNA integration into the host chromosome, by performing a series of DNA cutting and joining reactions. This is Gag-Pro-Pol polyprotein (gag-pro-pol) from Human T-cell leukemia virus 1 (isolate Caribbea HS-35 subtype A) (HTLV-1).